Here is a 534-residue protein sequence, read N- to C-terminus: CTP synthase (534 aa).

The segment at 1 to 265 (MKYIVVTGGV…TTRLMKHLKL (265 aa)) is amidoligase domain. Position 12 (Ser12) interacts with CTP. A UTP-binding site is contributed by Ser12. 13–18 (GLGKGI) is an ATP binding site. Tyr53 is a binding site for L-glutamine. Asp70 is an ATP binding site. 2 residues coordinate Mg(2+): Asp70 and Glu140. Residues 147–149 (DIE), 186–191 (KTKPSQ), and Lys222 contribute to the CTP site. UTP is bound by residues 186–191 (KTKPSQ) and Lys222. The 242-residue stretch at 289–530 (KLAIVGKYTN…VRAMCKYNKE (242 aa)) folds into the Glutamine amidotransferase type-1 domain. Position 352 (Gly352) interacts with L-glutamine. Cys379 serves as the catalytic Nucleophile; for glutamine hydrolysis. L-glutamine is bound by residues 380–383 (LGMQ), Glu403, and Arg460. Catalysis depends on residues His503 and Glu505.

It belongs to the CTP synthase family. As to quaternary structure, homotetramer.

The catalysed reaction is UTP + L-glutamine + ATP + H2O = CTP + L-glutamate + ADP + phosphate + 2 H(+). It carries out the reaction L-glutamine + H2O = L-glutamate + NH4(+). It catalyses the reaction UTP + NH4(+) + ATP = CTP + ADP + phosphate + 2 H(+). It functions in the pathway pyrimidine metabolism; CTP biosynthesis via de novo pathway; CTP from UDP: step 2/2. Allosterically activated by GTP, when glutamine is the substrate; GTP has no effect on the reaction when ammonia is the substrate. The allosteric effector GTP functions by stabilizing the protein conformation that binds the tetrahedral intermediate(s) formed during glutamine hydrolysis. Inhibited by the product CTP, via allosteric rather than competitive inhibition. Functionally, catalyzes the ATP-dependent amination of UTP to CTP with either L-glutamine or ammonia as the source of nitrogen. Regulates intracellular CTP levels through interactions with the four ribonucleotide triphosphates. The sequence is that of CTP synthase from Methanosarcina acetivorans (strain ATCC 35395 / DSM 2834 / JCM 12185 / C2A).